The sequence spans 71 residues: DNA-directed RNA polymerase subunit epsilon (71 aa).

Belongs to the RNA polymerase subunit epsilon family. In terms of assembly, RNAP is composed of a core of 2 alpha, a beta and a beta' subunit. The core is associated with a delta subunit, and at least one of epsilon or omega. When a sigma factor is associated with the core the holoenzyme is formed, which can initiate transcription.

The catalysed reaction is RNA(n) + a ribonucleoside 5'-triphosphate = RNA(n+1) + diphosphate. In terms of biological role, a non-essential component of RNA polymerase (RNAP). The polypeptide is DNA-directed RNA polymerase subunit epsilon (Geobacillus thermodenitrificans (strain NG80-2)).